Reading from the N-terminus, the 674-residue chain is RNA polymerase sigma factor RpoD (674 aa).

The disordered stretch occupies residues 214–252; the sequence is AEGAAPAARRPASDEPEYDADGNPISRIDEEEDDDDSSN. Positions 440–510 are sigma-70 factor domain-2; the sequence is MVEANLRLVI…TRSIADQART (71 aa). Positions 464–467 match the Interaction with polymerase core subunit RpoC motif; it reads DLIQ. The tract at residues 519-595 is sigma-70 factor domain-3; sequence ETINKLVRTG…DKNAILPLDS (77 aa). Positions 608–661 are sigma-70 factor domain-4; sequence VLASLTPREERVLRMRFGIGMNTDHTLEEVGQQFSVTRERIRQIEAKALRKLKH. A DNA-binding region (H-T-H motif) is located at residues 634–653; sequence LEEVGQQFSVTRERIRQIEA.

It belongs to the sigma-70 factor family. RpoD/SigA subfamily. Interacts transiently with the RNA polymerase catalytic core.

The protein localises to the cytoplasm. Sigma factors are initiation factors that promote the attachment of RNA polymerase to specific initiation sites and are then released. This sigma factor is the primary sigma factor during exponential growth. The chain is RNA polymerase sigma factor RpoD from Rhodobacter capsulatus (strain ATCC BAA-309 / NBRC 16581 / SB1003).